The primary structure comprises 367 residues: Chorismate synthase (367 aa).

Arg-48 serves as a coordination point for NADP(+). Residues 125–127 (RSS), 241–242 (NA), Gly-285, 300–304 (KPTSS), and Arg-326 each bind FMN.

It belongs to the chorismate synthase family. In terms of assembly, homotetramer. Requires FMNH2 as cofactor.

The enzyme catalyses 5-O-(1-carboxyvinyl)-3-phosphoshikimate = chorismate + phosphate. The protein operates within metabolic intermediate biosynthesis; chorismate biosynthesis; chorismate from D-erythrose 4-phosphate and phosphoenolpyruvate: step 7/7. Catalyzes the anti-1,4-elimination of the C-3 phosphate and the C-6 proR hydrogen from 5-enolpyruvylshikimate-3-phosphate (EPSP) to yield chorismate, which is the branch point compound that serves as the starting substrate for the three terminal pathways of aromatic amino acid biosynthesis. This reaction introduces a second double bond into the aromatic ring system. The chain is Chorismate synthase from Dinoroseobacter shibae (strain DSM 16493 / NCIMB 14021 / DFL 12).